We begin with the raw amino-acid sequence, 256 residues long: Ethylene-responsive transcription factor ERF084 (256 aa).

The segment at residues glycine 115–valine 172 is a DNA-binding region (AP2/ERF).

It belongs to the AP2/ERF transcription factor family. ERF subfamily.

The protein localises to the nucleus. In terms of biological role, probably acts as a transcriptional activator. Binds to the GCC-box pathogenesis-related promoter element. May be involved in the regulation of gene expression by stress factors and by components of stress signal transduction pathways. The protein is Ethylene-responsive transcription factor ERF084 (ERF084) of Arabidopsis thaliana (Mouse-ear cress).